The chain runs to 656 residues: MAEEEPRIGVYVCHCGVNIAGVVDVKEVAEFAKTLKNVVVARDYKYVCSDPGQEIIQRDIEKYDLNRVVVAACSPRLHEPTFRRCVEEAGLNPYCFEMANIREHCSWVHMDDPARATEKAKDLVRMAVAKARLLESLETIKVDVTDRALVIGGGVSGIQAALDLADMGFEVILVEKEPSIGGRMAQLDKTFPTNDCSICILAPKMVDVSKHPNIKMYTYAEVVEVDGYVGNFTVKIEKKPRYVDEDACTGCGACAEVCPIEVPNEFDEGLGMRKAIYKPFPQAVPSVFTIDEEHCIRCGLCEEVCDADAIDFDQEPEIVEEEVGAIICAIGYDTCDPTEREEYGYGVYDNVITSIELERLINASGPTGGKVVRPSDGKKPKRIAFIQCVGSRDPHRTNPYCSNVCCMYAMKLAQLIREKYPETQIDIYYMDVRAFGKGYEEYYERSQKQYGIRFIRGRPAEIVEDPETKNLIVRAEDTLLGDVVEREYDLVVLSVGMVPRDSADVIQEVLSISRSPDGFFMEAHPKLRPVDTAIDGIFLAGACQGPKDIPSSVAQGSAAAARAATALAAGEVAVEPIVSEVDEEICGGCGTCVELCPYGAIELVEKDGKLVAEVTAALCKGCGTCAAACPSGAMEQNHFKTEQLYKQIEGAFRDPA.

152-175 provides a ligand contact to FAD; sequence GGGVSGIQAALDLADMGFEVILVE. 4Fe-4S ferredoxin-type domains lie at 238-269, 286-315, 577-606, and 610-639; these read KKPRYVDEDACTGCGACAEVCPIEVPNEFDEG, SVFTIDEEHCIRCGLCEEVCDADAIDFDQE, IVSEVDEEICGGCGTCVELCPYGAIELVEK, and LVAEVTAALCKGCGTCAAACPSGAMEQNHF. [4Fe-4S] cluster is bound by residues Cys248, Cys251, Cys254, Cys258, Cys295, Cys298, Cys301, Cys305, Cys586, Cys589, Cys592, Cys596, Cys619, Cys622, Cys625, and Cys629.

Belongs to the HdrA family. The ferredoxin:CoB-CoM heterodisulfide reductase is composed of three subunits; HdrA, HdrB and HdrC. It depends on [4Fe-4S] cluster as a cofactor. The cofactor is FAD.

The protein operates within cofactor metabolism; coenzyme M-coenzyme B heterodisulfide reduction; coenzyme B and coenzyme M from coenzyme M-coenzyme B heterodisulfide: step 1/1. In terms of biological role, part of a complex that catalyzes the reversible reduction of CoM-S-S-CoB to the thiol-coenzymes H-S-CoM (coenzyme M) and H-S-CoB (coenzyme B). The protein is CoB--CoM heterodisulfide reductase iron-sulfur subunit A 2 (hdrA2) of Methanopyrus kandleri (strain AV19 / DSM 6324 / JCM 9639 / NBRC 100938).